The primary structure comprises 2439 residues: Mucin-6 (2439 aa).

Positions 1-22 (MVQRWLLLSCCGALLSAGLANT) are cleaved as a signal peptide. Residues 43 to 214 (GQCSTWGAGH…KLDDPGEICT (172 aa)) form the VWFD 1 domain. 2 disulfides stabilise this stretch: Cys-45–Cys-176 and Cys-67–Cys-213. An N-linked (GlcNAc...) asparagine glycan is attached at Asn-268. The region spanning 302 to 357 (CPANQVYQECGSACVKTCSNPQHSCSSSCTFGCFCPEGTVLNDLSNNHTCVPVTQC) is the TIL domain. A VWFD 2 domain is found at 395–579 (GHCSLEGGSF…ALERETDPCS (185 aa)). Cystine bridges form between Cys-397-Cys-533 and Cys-419-Cys-578. 2 N-linked (GlcNAc...) asparagine glycosylation sites follow: Asn-486 and Asn-659. A VWFD 3 domain is found at 866–1038 (STCTLYGEGH…NSWKESPLCG (173 aa)). Disulfide bonds link Cys-868–Cys-1002, Cys-890–Cys-1037, Cys-899–Cys-999, and Cys-917–Cys-924. 2 N-linked (GlcNAc...) asparagine glycosylation sites follow: Asn-975 and Asn-1179. 8 disordered regions span residues 1202–1455 (PQPP…TSLV), 1471–1626 (ATSA…LVTP), 1642–1834 (SASI…HPHT), 1868–1983 (SIHS…STGP), 2033–2077 (ATSA…THSS), 2090–2196 (SSSW…SASP), 2233–2278 (VSPT…SLTT), and 2323–2348 (LTAH…SPGV). A compositionally biased stretch (low complexity) spans 1224 to 1265 (TGTSTTIGLLSSTGPSPSSNHTPASPTQTPLLPATLTSSKPT). Positions 1276–1286 (TAVTPQATSGL) are enriched in polar residues. Positions 1294-1339 (STATKPTVTQATTRATASTASPATTSTAQSTTRTTMTLPTPATSGT) are enriched in low complexity. Residues 1340–1351 (SPTLPKSTNQEL) are compositionally biased toward polar residues. Low complexity-rich tracts occupy residues 1352–1373 (PGTT…TGPT) and 1381–1415 (TRPT…AGSP). Composition is skewed to polar residues over residues 1416–1455 (VPST…TSLV), 1471–1481 (ATSASNHSAPT), and 1490–1520 (LKAT…STNK). Low complexity-rich tracts occupy residues 1521-1567 (TPTS…ATSS) and 1574-1611 (TTHS…PQTT). Residues 1561 to 1738 (TNSATSSRPP…TTSGTSQSRS (178 aa)) form a 1; truncated repeat. The approximate repeats stretch occupies residues 1607–1953 (HPQTTLPTHV…STGTRTPVAH (347 aa)). Positions 1659–1686 (LKATGSTHTAPTMTLTTSGTSQALSSLN) are enriched in polar residues. Over residues 1687–1768 (TAKTSTSLHS…PEVTSTSTTS (82 aa)) the composition is skewed to low complexity. The span at 1769–1793 (ITPNHTSTGTRTPVAHTTSATSSRL) shows a compositional bias: polar residues. Residues 1785–1953 (TTSATSSRLP…STGTRTPVAH (169 aa)) form repeat 2. Low complexity-rich tracts occupy residues 1794-1834 (PTPF…HPHT) and 1891-1917 (TAPP…TSTS). Positions 1918–1962 (LPYHTSSTHHPEVTPTSTTNITPKHTSTGTRTPVAHTTSASSSRL) are enriched in polar residues. A compositionally biased stretch (low complexity) spans 1963-1983 (PTPFTTHSPPTGSSPFSSTGP). A compositionally biased stretch (polar residues) spans 2052–2070 (LKATGSTHTAPPMTVTTSG). A compositionally biased stretch (low complexity) spans 2090 to 2102 (SSSWLPQNSSSRP). Residues 2107–2120 (ITTQLPHLSSATTP) show a composition bias toward polar residues. Low complexity predominate over residues 2121–2196 (VSTTNQLSSS…PTTASVSASP (76 aa)). Positions 2240-2264 (HLASSTIAFPSTPRTTASTHTAPAF) are enriched in polar residues. A compositionally biased stretch (low complexity) spans 2265 to 2278 (SSQSTTSRSTSLTT). Polar residues predominate over residues 2323–2347 (LTAHGSTPASAPVSSLGTPTPTSPG). Cystine bridges form between Cys-2349/Cys-2396, Cys-2363/Cys-2410, Cys-2372/Cys-2430, and Cys-2376/Cys-2432. The 90-residue stretch at 2349-2438 (CSVREQQEEI…HCVCSSVACG (90 aa)) folds into the CTCK domain.

As to quaternary structure, multimer; disulfide-linked. Post-translationally, O-glycosylated. Expressed in the regenerative zone of gastric antrum, gastric body mucosa and gastric incisura mucosa. Expressed in the deeper mucous glands of gastric antrum. Overexpressed in Helicobacter pylori infected gastric epithelium. Highly expressed in duodenal Brunner's glands, gall bladder, seminal vesicle, pancreatic centroacinar cells and ducts, and periductal glands of the common bile duct.

The protein resides in the secreted. May provide a mechanism for modulation of the composition of the protective mucus layer related to acid secretion or the presence of bacteria and noxious agents in the lumen. Plays an important role in the cytoprotection of epithelial surfaces and are used as tumor markers in a variety of cancers. May play a role in epithelial organogenesis. The sequence is that of Mucin-6 (MUC6) from Homo sapiens (Human).